We begin with the raw amino-acid sequence, 418 residues long: MSLLDCFCASRTRVESLRPEKQSETSIHQYLVDESAISRPPPSARASEVICSTDVSHYELQVEIGRGFDNLTSVHLARHTPTGTLVTVKITNLESCTEERLKALQRAVILSHFFQHPNITTYWTVFTVGSWLWVISPFMAYGSASQLLRTYFPDGMSETLIRNILFGAVQGLNYLHQNGCIHRSFKASHILISGDGLVTLSGLSHLHSLLKHGQRHRAVFDFPQFSTSVQPWLSPELLRQDLHGYNVKSDIYSVGITACELASGQVPFQDMHRTQMLLQKLKGPPYSPLDVSIFPQSDSRMRNSQSGVDSGIGESVLVSTGTHTVNSDRLHTPSTKTFSPAFFSLVQLCLQQDPEKRPSASSLLSHVFFKQMKEESQDSILPLLPPAYNRPSASLQPVSPWSELEFQFPDDKDPVWEF.

In terms of domain architecture, Protein kinase spans 58–369; that stretch reads YELQVEIGRG…ASSLLSHVFF (312 aa). Residues 64 to 72 and K89 contribute to the ATP site; that span reads IGRGFDNLT.

This sequence belongs to the protein kinase superfamily. STE Ser/Thr protein kinase family. STE20 subfamily. In terms of assembly, component of a trimeric complex composed of STK11/LKB1, STRAD (STRADA or STRADB) and CAB39/MO25 (CAB39/MO25alpha or CAB39L/MO25beta): the complex tethers STK11/LKB1 in the cytoplasm and stimulates its catalytic activity. Interacts with BIRC4/XIAP. These two proteins are likely to coexist in a complex with TAK1, TRAF6, TAB1 and TAB2.

It is found in the nucleus. The protein resides in the cytoplasm. Its function is as follows. Pseudokinase which, in complex with CAB39/MO25 (CAB39/MO25alpha or CAB39L/MO25beta), binds to and activates STK11/LKB1. Adopts a closed conformation typical of active protein kinases and binds STK11/LKB1 as a pseudosubstrate, promoting conformational change of STK11/LKB1 in an active conformation. This Mus musculus (Mouse) protein is STE20-related kinase adapter protein beta (Stradb).